A 158-amino-acid polypeptide reads, in one-letter code: SsrA-binding protein (158 aa).

This sequence belongs to the SmpB family.

The protein resides in the cytoplasm. In terms of biological role, required for rescue of stalled ribosomes mediated by trans-translation. Binds to transfer-messenger RNA (tmRNA), required for stable association of tmRNA with ribosomes. tmRNA and SmpB together mimic tRNA shape, replacing the anticodon stem-loop with SmpB. tmRNA is encoded by the ssrA gene; the 2 termini fold to resemble tRNA(Ala) and it encodes a 'tag peptide', a short internal open reading frame. During trans-translation Ala-aminoacylated tmRNA acts like a tRNA, entering the A-site of stalled ribosomes, displacing the stalled mRNA. The ribosome then switches to translate the ORF on the tmRNA; the nascent peptide is terminated with the 'tag peptide' encoded by the tmRNA and targeted for degradation. The ribosome is freed to recommence translation, which seems to be the essential function of trans-translation. The chain is SsrA-binding protein from Parafrankia sp. (strain EAN1pec).